Consider the following 135-residue polypeptide: MAKKWLNKVKWDDNGLVPVIVQEVGSNDVLMFAFMNRDALQRTVELGEAVFWSRSRKRLWHKGEESGHVQKVHEIRLDCDEDVVLLKVTQIDSIACHTGRHSCFFQKFEGDVESGDWQTVEPVLKDPSSIYAAKP.

Aspartate 78 serves as a coordination point for Mg(2+). Zn(2+) is bound at residue cysteine 79. Aspartate 80 and aspartate 82 together coordinate Mg(2+). Positions 96 and 103 each coordinate Zn(2+).

This sequence belongs to the PRA-CH family. In terms of assembly, homodimer. The cofactor is Mg(2+). Zn(2+) is required as a cofactor.

The protein localises to the cytoplasm. The enzyme catalyses 1-(5-phospho-beta-D-ribosyl)-5'-AMP + H2O = 1-(5-phospho-beta-D-ribosyl)-5-[(5-phospho-beta-D-ribosylamino)methylideneamino]imidazole-4-carboxamide. It functions in the pathway amino-acid biosynthesis; L-histidine biosynthesis; L-histidine from 5-phospho-alpha-D-ribose 1-diphosphate: step 3/9. Catalyzes the hydrolysis of the adenine ring of phosphoribosyl-AMP. This Cupriavidus metallidurans (strain ATCC 43123 / DSM 2839 / NBRC 102507 / CH34) (Ralstonia metallidurans) protein is Phosphoribosyl-AMP cyclohydrolase.